We begin with the raw amino-acid sequence, 268 residues long: Ribonuclease P protein subunit p30 (268 aa).

Residue alanine 2 is modified to N-acetylalanine. Serine 251 is subject to Phosphoserine.

The protein belongs to the eukaryotic/archaeal RNase P protein component 3 family. Component of nuclear RNase P and RNase MRP ribonucleoproteins. RNase P consists of a catalytic RNA moiety and about 10 protein subunits; POP1, POP4, POP5, POP7, RPP14, RPP21, RPP25, RPP30, RPP38 and RPP40. Within the RNase P complex, POP1, POP7 and RPP25 form the 'finger' subcomplex, POP5, RPP14, RPP40 and homodimeric RPP30 form the 'palm' subcomplex, and RPP21, POP4 and RPP38 form the 'wrist' subcomplex. All subunits of the RNase P complex interact with the catalytic RNA. Several subunits of RNase P are also part of the RNase MRP complex. RNase MRP consists of a catalytic RNA moiety and about 8 protein subunits; POP1, POP7, RPP25, RPP30, RPP38, RPP40 and possibly also POP4 and POP5.

It is found in the nucleus. The protein resides in the nucleolus. Its function is as follows. Component of ribonuclease P, a ribonucleoprotein complex that generates mature tRNA molecules by cleaving their 5'-ends. Also a component of the MRP ribonuclease complex, which cleaves pre-rRNA sequences. The protein is Ribonuclease P protein subunit p30 (Rpp30) of Mus musculus (Mouse).